The primary structure comprises 563 residues: Probable terpene synthase 4 (563 aa).

Positions 316, 320, and 469 each coordinate Mg(2+). A DDXXD motif motif is present at residues 316 to 320; the sequence is DDIFD.

It belongs to the terpene synthase family. Mg(2+) serves as cofactor.

In terms of biological role, probable sesquiterpene synthase. In Ricinus communis (Castor bean), this protein is Probable terpene synthase 4 (TPS4).